The primary structure comprises 275 residues: uncharacterized protein (275 aa).

A coiled-coil region spans residues 75-157 (AKELIKNRRL…AELKQAAEQG (83 aa)).

This is an uncharacterized protein from Bacillus subtilis (strain 168).